We begin with the raw amino-acid sequence, 208 residues long: Ribonuclease HII (208 aa).

The RNase H type-2 domain occupies 5 to 198 (PLIAGVDEVG…CQPRLEHDCR (194 aa)). A divalent metal cation is bound by residues Asp11, Glu12, and Asp106.

It belongs to the RNase HII family. The cofactor is Mn(2+). Mg(2+) serves as cofactor.

Its subcellular location is the cytoplasm. It catalyses the reaction Endonucleolytic cleavage to 5'-phosphomonoester.. Its function is as follows. Endonuclease that specifically degrades the RNA of RNA-DNA hybrids. The chain is Ribonuclease HII from Microcystis aeruginosa (strain NIES-843 / IAM M-2473).